Reading from the N-terminus, the 283-residue chain is Thymidylate synthase (283 aa).

Position 22 (Arg-22) interacts with dUMP. Catalysis depends on Cys-160, which acts as the Nucleophile. Residues 180-183 (RSCD), Asn-191, and 221-223 (HIY) contribute to the dUMP site. Asp-183 provides a ligand contact to (6R)-5,10-methylene-5,6,7,8-tetrahydrofolate. Ala-282 is a (6R)-5,10-methylene-5,6,7,8-tetrahydrofolate binding site.

It belongs to the thymidylate synthase family. Bacterial-type ThyA subfamily. As to quaternary structure, homodimer.

It is found in the cytoplasm. It carries out the reaction dUMP + (6R)-5,10-methylene-5,6,7,8-tetrahydrofolate = 7,8-dihydrofolate + dTMP. Its pathway is pyrimidine metabolism; dTTP biosynthesis. Its function is as follows. Catalyzes the reductive methylation of 2'-deoxyuridine-5'-monophosphate (dUMP) to 2'-deoxythymidine-5'-monophosphate (dTMP) while utilizing 5,10-methylenetetrahydrofolate (mTHF) as the methyl donor and reductant in the reaction, yielding dihydrofolate (DHF) as a by-product. This enzymatic reaction provides an intracellular de novo source of dTMP, an essential precursor for DNA biosynthesis. The polypeptide is Thymidylate synthase (Idiomarina loihiensis (strain ATCC BAA-735 / DSM 15497 / L2-TR)).